Here is a 192-residue protein sequence, read N- to C-terminus: Thymidine kinase (192 aa).

ATP contacts are provided by residues 9-16 (SAMNAGKS) and 87-90 (DECQ). Glu88 functions as the Proton acceptor in the catalytic mechanism. 4 residues coordinate Zn(2+): Cys145, Cys147, Cys182, and His185.

This sequence belongs to the thymidine kinase family. As to quaternary structure, homotetramer.

It is found in the cytoplasm. The catalysed reaction is thymidine + ATP = dTMP + ADP + H(+). The chain is Thymidine kinase from Vibrio vulnificus (strain YJ016).